The chain runs to 404 residues: Inner membrane transport protein YdiM (404 aa).

The Periplasmic portion of the chain corresponds to 1 to 5 (MKNPY). The chain crosses the membrane as a helical span at residues 6 to 26 (FPTALGLYFNYLVHGMGVLLM). The Cytoplasmic segment spans residues 27–43 (SLNMASLETLWQTNAAG). Residues 44-64 (VSIVISSLGIGRLSVLLFAGL) traverse the membrane as a helical segment. At 65-84 (LSDRFGRRPFIMLGMCCYMA) the chain is on the periplasmic side. The helical transmembrane segment at 85-105 (FFFGILQTNNIIIAYVFGFLA) threads the bilayer. The Cytoplasmic portion of the chain corresponds to 106–132 (GMANSFLDAGTYPSLMEAFPRSPGTAN). The chain crosses the membrane as a helical span at residues 133-153 (ILIKAFVSSGQFLLPLIISLL). Topologically, residues 154–157 (VWAE) are periplasmic. Residues 158-178 (LWFGWSFMIAAGIMFINALFL) traverse the membrane as a helical segment. The Cytoplasmic segment spans residues 179–206 (YRCTFPPHPGRRLPVIKKTTSSTEHRCS). Residues 207 to 227 (IIDLASYTLYGYISMATFYLV) form a helical membrane-spanning segment. Residues 228–246 (SQWLAQYGQFVAGMSYTMS) are Periplasmic-facing. The helical transmembrane segment at 247 to 267 (IKLLSIYTVGSLLCVFITAPL) threads the bilayer. The Cytoplasmic portion of the chain corresponds to 268 to 273 (IRNTVR). The chain crosses the membrane as a helical span at residues 274–294 (PTTLLMLYTFISFIALFTVCL). At 295 to 296 (HP) the chain is on the periplasmic side. A helical transmembrane segment spans residues 297–317 (TFYVVIIFAFVIGFTSAGGVV). The Cytoplasmic portion of the chain corresponds to 318–336 (QIGLTLMAERFPYAKGKAT). Residues 337-357 (GIYYSAGSIATFTIPLITAHL) form a helical membrane-spanning segment. Residues 358–364 (SQRSIAD) are Periplasmic-facing. The chain crosses the membrane as a helical span at residues 365 to 385 (IMWFDTAIAAIGFLLALFIGL). At 386–404 (RSRKKTRHHSLKENVAPGG) the chain is on the cytoplasmic side.

This sequence belongs to the major facilitator superfamily.

It is found in the cell inner membrane. The sequence is that of Inner membrane transport protein YdiM (ydiM) from Escherichia coli (strain K12).